Here is a 287-residue protein sequence, read N- to C-terminus: mRNA-capping enzyme regulatory subunit OPG124 (287 aa).

The protein belongs to the orthopoxvirus mRNA-capping enzyme regulatory subunit family. Interacts with the catalytic subunit OPG113.

Its subcellular location is the virion. Its function is as follows. Regulatory subunit of the mRNA cap enzyme which stabilizes the catalytic subunit and enhances its methyltransferase activity through an allosteric mechanism. Heterodimeric mRNA capping enzyme catalyzes the linkage of a N7-methyl-guanosine moiety to the first transcribed nucleotide (cap 0 structure), whereas the methyltransferase OPG102 is responsible for a second methylation at the 2'-O position of the ribose (cap 1 structure). Also involved in early viral gene transcription termination and intermediate viral gene transcription initiation. Early gene transcription termination requires the termination factor VTF, the DNA-dependent ATPase NPH-I/OPG123 and the RAP94/OPG109 subunit of the viral RNA polymerase, as well as the presence of a specific termination motif. Binds, together with RAP94/OPG109, to the termination motif 5'-UUUUUNU-3' in the nascent early mRNA. This Vaccinia virus (strain Copenhagen) (VACV) protein is mRNA-capping enzyme regulatory subunit OPG124 (OPG124).